The following is a 185-amino-acid chain: Ribosome-recycling factor (185 aa).

It belongs to the RRF family.

It is found in the cytoplasm. In terms of biological role, responsible for the release of ribosomes from messenger RNA at the termination of protein biosynthesis. May increase the efficiency of translation by recycling ribosomes from one round of translation to another. In Pseudomonas entomophila (strain L48), this protein is Ribosome-recycling factor.